The sequence spans 434 residues: Adenylosuccinate synthetase (434 aa).

GTP contacts are provided by residues 22-28 (GDEGKGK) and 50-52 (GHT). The active-site Proton acceptor is aspartate 23. Positions 23 and 50 each coordinate Mg(2+). IMP-binding positions include 23-26 (DEGK), 48-51 (NAGH), threonine 139, arginine 153, glutamine 234, threonine 249, and arginine 313. The active-site Proton donor is histidine 51. 309-315 (ATTGRKR) provides a ligand contact to substrate. GTP is bound by residues arginine 315, 341-343 (KLD), and 423-425 (SVG).

This sequence belongs to the adenylosuccinate synthetase family. Homodimer. The cofactor is Mg(2+).

The protein localises to the cytoplasm. The catalysed reaction is IMP + L-aspartate + GTP = N(6)-(1,2-dicarboxyethyl)-AMP + GDP + phosphate + 2 H(+). It participates in purine metabolism; AMP biosynthesis via de novo pathway; AMP from IMP: step 1/2. Plays an important role in the de novo pathway of purine nucleotide biosynthesis. Catalyzes the first committed step in the biosynthesis of AMP from IMP. The sequence is that of Adenylosuccinate synthetase from Chlorobium luteolum (strain DSM 273 / BCRC 81028 / 2530) (Pelodictyon luteolum).